A 124-amino-acid polypeptide reads, in one-letter code: S-adenosylmethionine decarboxylase proenzyme (124 aa).

The active-site Schiff-base intermediate with substrate; via pyruvic acid is the Ser63. Pyruvic acid (Ser); by autocatalysis is present on Ser63. Catalysis depends on His68, which acts as the Proton acceptor; for processing activity. The Proton donor; for catalytic activity role is filled by Cys83.

The protein belongs to the prokaryotic AdoMetDC family. Type 1 subfamily. Heterotetramer of two alpha and two beta chains arranged as a dimer of alpha/beta heterodimers. It depends on pyruvate as a cofactor. In terms of processing, is synthesized initially as an inactive proenzyme. Formation of the active enzyme involves a self-maturation process in which the active site pyruvoyl group is generated from an internal serine residue via an autocatalytic post-translational modification. Two non-identical subunits are generated from the proenzyme in this reaction, and the pyruvate is formed at the N-terminus of the alpha chain, which is derived from the carboxyl end of the proenzyme. The post-translation cleavage follows an unusual pathway, termed non-hydrolytic serinolysis, in which the side chain hydroxyl group of the serine supplies its oxygen atom to form the C-terminus of the beta chain, while the remainder of the serine residue undergoes an oxidative deamination to produce ammonia and the pyruvoyl group blocking the N-terminus of the alpha chain.

It catalyses the reaction S-adenosyl-L-methionine + H(+) = S-adenosyl 3-(methylsulfanyl)propylamine + CO2. Its pathway is amine and polyamine biosynthesis; S-adenosylmethioninamine biosynthesis; S-adenosylmethioninamine from S-adenosyl-L-methionine: step 1/1. Functionally, catalyzes the decarboxylation of S-adenosylmethionine to S-adenosylmethioninamine (dcAdoMet), the propylamine donor required for the synthesis of the polyamines spermine and spermidine from the diamine putrescine. The protein is S-adenosylmethionine decarboxylase proenzyme of Geobacillus kaustophilus (strain HTA426).